The primary structure comprises 339 residues: NADH-quinone oxidoreductase subunit H (339 aa).

Transmembrane regions (helical) follow at residues 9-29, 50-70, 82-102, 115-135, 161-181, 187-207, 235-255, 275-295, and 311-331; these read IFPL…LILC, PNVV…KLLF, ILFI…WAVI, VGVL…IIAG, MGLV…SEII, MPWW…ISVL, MGFA…SAMT, IPGF…FLWI, and GWKV…SVLV.

Belongs to the complex I subunit 1 family. As to quaternary structure, NDH-1 is composed of 14 different subunits. Subunits NuoA, H, J, K, L, M, N constitute the membrane sector of the complex.

Its subcellular location is the cell inner membrane. It catalyses the reaction a quinone + NADH + 5 H(+)(in) = a quinol + NAD(+) + 4 H(+)(out). Functionally, NDH-1 shuttles electrons from NADH, via FMN and iron-sulfur (Fe-S) centers, to quinones in the respiratory chain. The immediate electron acceptor for the enzyme in this species is believed to be ubiquinone. Couples the redox reaction to proton translocation (for every two electrons transferred, four hydrogen ions are translocated across the cytoplasmic membrane), and thus conserves the redox energy in a proton gradient. This subunit may bind ubiquinone. This Rickettsia peacockii (strain Rustic) protein is NADH-quinone oxidoreductase subunit H.